The following is a 146-amino-acid chain: Snaclec agkicetin-C subunit beta (146 aa).

The N-terminal stretch at 1 to 23 (MGRFIFVSFGLLVVFLSLSGTGA) is a signal peptide. 3 cysteine pairs are disulfide-bonded: Cys-25–Cys-36, Cys-53–Cys-142, and Cys-119–Cys-134. Residues 32–143 (YEGNCYLVVK…CSRTQPFVCK (112 aa)) enclose the C-type lectin domain.

This sequence belongs to the snaclec family. Heterodimer of subunits alpha and beta; disulfide-linked. In terms of tissue distribution, expressed by the venom gland.

The protein resides in the secreted. In terms of biological role, is a potent glycoprotein Ibalpha (GP1BA) antagonist. Concentration-dependently inhibits botrocetin-, ristocetin- and low dose thrombin-induced platelet aggregation. Inhibits platelet adhesion only through inhibiting the vWF interaction with GP1BA, but has minimal effect on other platelet receptors, such as alpha-IIb/beta-3 (ITGA2B/ITGB3) or alpha-2/beta-1 (ITGA2/ITGB1). Causes an instant severe thrombocytopenia in rats and is not lethal to mice. The sequence is that of Snaclec agkicetin-C subunit beta from Deinagkistrodon acutus (Hundred-pace snake).